Reading from the N-terminus, the 132-residue chain is uncharacterized protein (132 aa).

The segment at 39 to 93 is disordered; it reads HPAGASEALGALPPPRQLVEKRRVSPPRRLDQSGRDGGAVAKCSLSRGLSPPGWT. A compositionally biased stretch (basic and acidic residues) spans 56–72; that stretch reads LVEKRRVSPPRRLDQSG.

This is an uncharacterized protein from Homo sapiens (Human).